A 2059-amino-acid polypeptide reads, in one-letter code: MSTWVALNIEPAEAVEEEVDDTKEIQIEEALKLYQNALKLHSQGPAFYAQAAEAYDALLSSEIFKYPESLSDYKRAATELELTETSDYVGNADGAEPLGDYDINDSTSSTLLQTIYLAYKNHGQFVLDSLRAIIQNAAQESDSTPGLSAEIAERASTALTSFAEALERDDTDLNLWRQSARLCSTLQSYRLARYCLESVLADDENRLEVRTEQLGLEETFAEERLRETLLSLQDRISVCQVPIKKPKKALLKFLKRQSDPYPYLPGLPDSLQNVLPSKGPLALSTARHDLKPLSPTWADLGKTILQALTDKEQGTIDLGPGTAISVSTPALSPELKATATKETQVQDQSPRAQDEELSSDPKPITHMSGEDDNNMDFQPSVKHEALDSTAEHADDHSSIDQRAEKQLIESLEIQTSQSPELANQQETPNADDADPKSSTNGARKRSSTSAVAEDQTESVRSKSRRTRLRESHAEASLQADEVSFDHNKYYEDRLEVFVRADEWMFGTVESLLSKLGIEDLGSVDELRKQISPTSDGKDLPDSDINGKAEYILPRDLRHILKGWDEGKSQATLQCDNVAALQDIQGMGKSGLAIFLEHSRKSARKLGMKQVLSGIEELLMLMNTINDGWFHLREAAFEWLKCLLMPDYGRISAQDGVFGTSNFTIINSTYTLFQWPDTLKETVVQILIREDETIYKGVSEYIEALERQILGASADTPFEYTTNHFAYLEMAQAIFELHLDIYASINNPNSEIDQGIRVQQKDRLARWSLLARTSLTHFMDYSSPGSHQDNIVLRHIWASTFHSNMTTDAEREHVLLCLQELKHLLSRLKDPVISLVNNAIMPEISIEAVDQEISKLESMDFFMRIFNTESEDPVGLIETIEPILEPASVQFVEENTSEEQGHSLPTSQLHEMGSFLDRGDATLRLFLWRRLQDAYRKIDYAPKVVSCHLRSIETIVRELWNPEHLEEPSEHRQITLLRWLKSLDGILNKTVTAVLQEPAKAYECFDMDHVKSSLSAVTLVLKLLHSFVLYEDSVRVGQLSGSDVRGALAKSLESFRDKLREMHVRCWILHYTLVREAIAQNPELFETPLEDRILYLRSVHNALGIRKMCKRSHKQFLKLVKSEIFSLDEKADYEYDICQLLYDIHGIKLSPVDGYLEDHGCPPEKLDRSTAILMIDFVMKQAKKMNIRDLSKSDLKYTIEKMQQAIGTTKSSPPLSYNKRILTAYLKSPLNPTEIFRAVRGVEDLALLPVPTESAVIAKNGWYFLLGHAALTKFRSQKRLNPVPTTDLDEAITWFRQDLEHNTQRWESWYRLAQTYDSKLEEDITWSADKINNNRTELVTWQRYAIHSYAMAVATAARNADPTPETRALVSDLYTDFGIRLYSSSREPLSMAAFSLSDFTRHYNSEENQQMYEALPFKEMRLYSVWNLASYLLKRAIPDKPKSWMTRYMLSKCLWKMFSCDDSVRGTSKHVHLDDLLDSLLDSIDALPQKRDSRSDPIFEPHYKLVSIVHKLVHRGVVTPAEGSKTLVATPWARKVPPPEEGAPWKPYIMSVIRNLKHADKSNWHHRMAVRAAHITYDDEKDAAAAAGAKGELTQQIFTKTMTIQVWRPENERPGRHFVYTTRYVYFFVALLEQLEDRASLDQLLRRVRKKQGDFINHAKLWEDLCLTYARVIRKAGNINEGHDESVFKPIGWDEFVANTARLEGLLQLAPESITLLELLRDAVELKKLNNNLMKVSLLEDLIADIYSRLYEVNMPNVIEQANEENKEKMKVDHLLMASDGAADTPTPPTSAPASEAPAPRGRTKGIARRDIQKRAETIVQRKLAPRAPIAKAPAAAESEPSHGVGAVTSAPEQTKDTATSAAVADELASGQQSDIPNSLHDSADDESELSEIDDEKLSKLAAERSLLFPNLQDRGSLDPEVGMSAAASADGDGANEGAGDGEEDADREEDADLGDEGETMVEEGETMVEEGDDGADGDEAEIDGEGEGEGEGEGEGEDEEDNEAAGEEEGVGEGDGEPEGEADANEANEMDVDDGGEQPAAAEADQESDHVSDSEAMDI.

TPR repeat units follow at residues 11-44, 49-86, and 139-172; these read PAEA…HSQG, AQAA…TETS, and QESD…DDTD. Disordered stretches follow at residues 337-378 and 415-476; these read ATAT…MDFQ and TSQS…AEAS. Polar residues-rich tracts occupy residues 340-351 and 415-428; these read TKETQVQDQSPR and TSQS…QETP. TPR repeat units follow at residues 1029–1064 and 1271–1304; these read YEDS…MHVR and TKFR…NTQR. Disordered stretches follow at residues 1779–1896 and 1908–2059; these read DGAA…DDEK and FPNL…AMDI. Positions 1807 to 1816 are enriched in basic and acidic residues; it reads ARRDIQKRAE. A compositionally biased stretch (low complexity) spans 1825-1836; sequence PRAPIAKAPAAA. Residues 1850–1860 show a composition bias toward polar residues; that stretch reads APEQTKDTATS. Residues 1883–1894 are compositionally biased toward acidic residues; sequence ADDESELSEIDD. Positions 1925–1937 are enriched in low complexity; sequence AAASADGDGANEG. Residues 1939 to 2036 show a composition bias toward acidic residues; that stretch reads GDGEEDADRE…ANEMDVDDGG (98 aa).

This sequence belongs to the HIR3 family.

It localises to the nucleus. Its function is as follows. Has a role in a nucleosome assembly pathway that is required for the integrity of heterochromatin and proper chromosome segregation. The protein is Histone transcription regulator 3 homolog (hir3) of Aspergillus oryzae (strain ATCC 42149 / RIB 40) (Yellow koji mold).